Consider the following 131-residue polypeptide: Norrin (131 aa).

Positions 1-24 (MRNHVLAASISMLSLLAIMGDTDS) are cleaved as a signal peptide. 4 cysteine pairs are disulfide-bonded: cysteine 37–cysteine 94, cysteine 53–cysteine 108, cysteine 63–cysteine 124, and cysteine 67–cysteine 126. Residues 37 to 130 (CMRHHYVDSI…ILSCHCEECS (94 aa)) enclose the CTCK domain.

In terms of assembly, homodimer; disulfide-linked. Component of a complex, at least composed of TSPAN12, FZD4, LRP5/6 and norrin (NDP). Binds FZD4 with high affinity. Interacts with LRP6 (via Beta-propellers 1 and 2). As to expression, expressed in the outer nuclear, inner nuclear and ganglion cell layers of the retina.

Its subcellular location is the secreted. Activates the canonical Wnt signaling pathway through FZD4 and LRP5 coreceptor. Plays a central role in retinal vascularization by acting as a ligand for FZD4 that signals via stabilizing beta-catenin (CTNNB1) and activating LEF/TCF-mediated transcriptional programs. Acts in concert with TSPAN12 to activate FZD4 independently of the Wnt-dependent activation of FZD4, suggesting the existence of a Wnt-independent signaling that also promote accumulation the beta-catenin (CTNNB1). May be involved in a pathway that regulates neural cell differentiation and proliferation. Possible role in neuroectodermal cell-cell interaction. This Mus musculus (Mouse) protein is Norrin (Ndp).